The primary structure comprises 180 residues: Large ribosomal subunit protein uL6 (180 aa).

This sequence belongs to the universal ribosomal protein uL6 family. Part of the 50S ribosomal subunit.

Its function is as follows. This protein binds to the 23S rRNA, and is important in its secondary structure. It is located near the subunit interface in the base of the L7/L12 stalk, and near the tRNA binding site of the peptidyltransferase center. The protein is Large ribosomal subunit protein uL6 of Borreliella burgdorferi (strain ATCC 35210 / DSM 4680 / CIP 102532 / B31) (Borrelia burgdorferi).